The chain runs to 291 residues: Nucleotide-binding protein Lm4b_02443 (291 aa).

13-20 (GMSGAGKT) is an ATP binding site. Position 63 to 66 (63 to 66 (DLRG)) interacts with GTP.

This sequence belongs to the RapZ-like family.

In terms of biological role, displays ATPase and GTPase activities. In Listeria monocytogenes serotype 4b (strain CLIP80459), this protein is Nucleotide-binding protein Lm4b_02443.